An 852-amino-acid chain; its full sequence is Protein Shroom1 (852 aa).

N-acetylmethionine is present on Met-1. The residue at position 18 (Ser-18) is a Phosphoserine. Disordered regions lie at residues 34–54 (SSFSAASGGPEPRTQSPGTDL), 81–109 (TSPRPRPAVAARSGPQPTEVPGTPGPLNR), and 125–218 (AAQA…ANQQ). A Phosphothreonine modification is found at Thr-103. Residues 125–144 (AAQAAEPPSPPASRAAYRQR) show a composition bias toward low complexity. A phosphoserine mark is found at Ser-133 and Ser-137. Positions 145-233 (LQGAQRRVLR…SEPGKLDRVG (89 aa)) constitute an ASD1 domain. Over residues 152 to 164 (VLRETSFQRKELR) the composition is skewed to basic and acidic residues. Phosphoserine occurs at positions 166, 190, and 224. Disordered stretches follow at residues 276–320 (LPET…GSGG), 399–431 (MRSPPDPHASQGPPASVHASDQPYGTGLGQRTG), 464–496 (SRPTSHTPTGTANDNIPTIDPTGLTTNPPTAAE), and 823–852 (DLGHHAPSPSPARPPGTCPPVQPPFPLLLT). The segment covering 279 to 289 (TQPQGSMNLDS) has biased composition (polar residues). Residues 301 to 313 (ASRSRSASGEVLG) show a composition bias toward low complexity. Positions 465–479 (RPTSHTPTGTANDNI) are enriched in polar residues. An ASD2 domain is found at 543 to 825 (EELVQELARL…QLDAIRDDLG (283 aa)). Over residues 830 to 852 (SPSPARPPGTCPPVQPPFPLLLT) the composition is skewed to pro residues.

This sequence belongs to the shroom family. Interacts with F-actin.

The protein localises to the cytoplasm. It is found in the cytoskeleton. In terms of biological role, may be involved in the assembly of microtubule arrays during cell elongation. The protein is Protein Shroom1 (SHROOM1) of Homo sapiens (Human).